Reading from the N-terminus, the 324-residue chain is NAD(P)H-dependent D-xylose reductase I,II (324 aa).

Tyrosine 54 acts as the Proton donor in catalysis. Substrate is bound at residue histidine 116. Residues 171 to 172 (SN), 220 to 229 (SSFGPQSFLE), and 276 to 286 (KSNNPERLAQN) each bind NAD(+).

The protein belongs to the aldo/keto reductase family.

The catalysed reaction is xylitol + NAD(+) = D-xylose + NADH + H(+). It catalyses the reaction xylitol + NADP(+) = D-xylose + NADPH + H(+). It participates in carbohydrate metabolism; D-xylose degradation. Reduces D-xylose into xylitol. Has a preference for NADPH, but can also utilize NADH as cosubstrate. The polypeptide is NAD(P)H-dependent D-xylose reductase I,II (xyrA) (Candida tropicalis (Yeast)).